The primary structure comprises 460 residues: Histidinol dehydrogenase (460 aa).

The substrate site is built by serine 269, glutamine 291, and histidine 294. Zn(2+)-binding residues include glutamine 291 and histidine 294. Catalysis depends on proton acceptor residues glutamate 358 and histidine 359. The substrate site is built by histidine 359, aspartate 392, glutamate 446, and histidine 451. Aspartate 392 is a binding site for Zn(2+). Histidine 451 provides a ligand contact to Zn(2+).

The protein belongs to the histidinol dehydrogenase family. Zn(2+) is required as a cofactor.

It carries out the reaction L-histidinol + 2 NAD(+) + H2O = L-histidine + 2 NADH + 3 H(+). Its pathway is amino-acid biosynthesis; L-histidine biosynthesis; L-histidine from 5-phospho-alpha-D-ribose 1-diphosphate: step 9/9. Its function is as follows. Catalyzes the sequential NAD-dependent oxidations of L-histidinol to L-histidinaldehyde and then to L-histidine. The protein is Histidinol dehydrogenase of Rhodopirellula baltica (strain DSM 10527 / NCIMB 13988 / SH1).